Here is a 450-residue protein sequence, read N- to C-terminus: Mitochondrial distribution and morphology protein 10 (450 aa).

This sequence belongs to the MDM10 family. In terms of assembly, component of the ER-mitochondria encounter structure (ERMES) or MDM complex, composed of MMM1, MDM10, MDM12 and MDM34. Associates with the mitochondrial outer membrane sorting assembly machinery SAM(core) complex.

The protein localises to the mitochondrion outer membrane. Functionally, component of the ERMES/MDM complex, which serves as a molecular tether to connect the endoplasmic reticulum and mitochondria. Components of this complex are involved in the control of mitochondrial shape and protein biogenesis and may function in phospholipid exchange. MDM10 is involved in the late assembly steps of the general translocase of the mitochondrial outer membrane (TOM complex). Functions in the TOM40-specific route of the assembly of outer membrane beta-barrel proteins, including the association of TOM40 with the receptor TOM22 and small TOM proteins. Can associate with the SAM(core) complex as well as the MDM12-MMM1 complex, both involved in late steps of the major beta-barrel assembly pathway, that is responsible for biogenesis of all outer membrane beta-barrel proteins. May act as a switch that shuttles between both complexes and channels precursor proteins into the TOM40-specific pathway. Plays a role in mitochondrial morphology and in the inheritance of mitochondria. The chain is Mitochondrial distribution and morphology protein 10 from Paracoccidioides lutzii (strain ATCC MYA-826 / Pb01) (Paracoccidioides brasiliensis).